A 2194-amino-acid chain; its full sequence is Supervillin (2194 aa).

Positions 1-174 are interaction with MYLK; the sequence is MKRKERIARR…SSYSRTELSG (174 aa). Disordered regions lie at residues 35-98, 118-335, 388-414, 450-500, 513-563, 589-667, 685-719, and 739-791; these read LEED…TQSL, EKYG…QRRH, PESI…KVLE, EDRG…TERM, AVSQ…QTSK, RASR…KVDE, KSFD…QPVT, and HPVM…DSST. Ser-50 is subject to Phosphoserine. Polar residues predominate over residues 87 to 98; sequence PYSSGIMDTQSL. 2 stretches are compositionally biased toward basic and acidic residues: residues 139–161 and 181–192; these read SRKD…ESSR and ESKDYGLHRSDG. Ser-245 and Ser-262 each carry phosphoserine. Basic and acidic residues-rich tracts occupy residues 283–294 and 308–319; these read PKHEWFLQKDSE and KVREKLVREESA. Positions 320–330 are enriched in polar residues; sequence RSSPELTSESL. 2 positions are modified to phosphoserine: Ser-321 and Ser-322. A compositionally biased stretch (polar residues) spans 455-467; it reads GRSQEAPSGTEDL. A compositionally biased stretch (low complexity) spans 540 to 551; that stretch reads PPQLQALKAKAP. Basic and acidic residues-rich tracts occupy residues 592–615 and 626–635; these read RKPE…ERGS and ENRKTSERFR. Phosphoserine occurs at positions 652 and 686. Basic and acidic residues predominate over residues 704–714; sequence QRLRRLQDRSH. 2 positions are modified to phosphoserine: Ser-747 and Ser-781. Residues 770 to 782 are compositionally biased toward basic and acidic residues; that stretch reads LARDQTNESKDSA. Residue Tyr-829 is modified to Phosphotyrosine. The residue at position 831 (Thr-831) is a Phosphothreonine. 6 positions are modified to phosphoserine: Ser-893, Ser-899, Ser-903, Ser-947, Ser-979, and Ser-1031. Residues 1036–1077 are disordered; the sequence is EFGEPTSEQTGAAAGKPAAPTATPVSWKPQDPSEQPQEKRYQ. Residues 1045–1059 are compositionally biased toward low complexity; that stretch reads TGAAAGKPAAPTATP. Residues Ser-1099 and Ser-1205 each carry the phosphoserine modification. Thr-1210 is subject to Phosphothreonine. 3 positions are modified to phosphoserine: Ser-1214, Ser-1302, and Ser-1385. The interval 1399–1667 is interaction with NEB; that stretch reads SNVSLRSVNL…KFLDWTELKR (269 aa). Gelsolin-like repeat units follow at residues 1421-1520, 1540-1662, 1732-1842, 1861-1962, and 1995-2102; these read KKLM…LGGQ, IETN…FLDW, ISVD…FQGG, WRLY…LGRR, and ATEF…FPSW. The 64-residue stretch at 2131 to 2194 folds into the HP domain; that stretch reads KLCKTIYPLA…VNLKKAKGLF (64 aa).

This sequence belongs to the villin/gelsolin family. As to quaternary structure, associates with F-actin. Interacts with NEB. Interacts with MYH9. Interacts with MYLK. Interacts with TASOR. Interacts with TRIP6 and DYNLT1. Interacts with KIF14; at midbody during cytokinesis.

It is found in the cell membrane. The protein localises to the cytoplasm. Its subcellular location is the cytoskeleton. The protein resides in the cell projection. It localises to the invadopodium. It is found in the podosome. The protein localises to the midbody. Its subcellular location is the cleavage furrow. Functionally, forms a high-affinity link between the actin cytoskeleton and the membrane. Is among the first costameric proteins to assemble during myogenesis and it contributes to myogenic membrane structure and differentiation. Appears to be involved in myosin II assembly. May modulate myosin II regulation through MLCK during cell spreading, an initial step in cell migration. May play a role in invadopodial function. Its function is as follows. May be involved in modulation of focal adhesions. Supervillin-mediated down-regulation of focal adhesions involves binding to TRIP6. Plays a role in cytokinesis through KIF14 interaction. This Bos taurus (Bovine) protein is Supervillin.